Here is a 707-residue protein sequence, read N- to C-terminus: Toxin RTX-I translocation ATP-binding protein (707 aa).

The Peptidase C39 domain occupies 1-125 (MDFYREEDYG…SLYQGKLILV (125 aa)). The active site involves H83. The 283-residue stretch at 154-436 (FIETLIVSIF…LAQLWQDFQQ (283 aa)) folds into the ABC transmembrane type-1 domain. 5 helical membrane-spanning segments follow: residues 158–178 (LIVS…FQVV), 188–208 (FSTL…EIVL), 295–315 (LVIL…SPIL), 387–407 (VVMV…DLSI), and 410–430 (LIAF…LAQL). The region spanning 468–703 (ITFRNIRFRY…PNGLYHYLHQ (236 aa)) is the ABC transporter domain. ATP is bound at residue 502–509 (GRSGSGKS).

Belongs to the ABC transporter superfamily. Protein-1 exporter (TC 3.A.1.109) family. In terms of assembly, homodimer.

The protein resides in the cell membrane. In terms of biological role, involved in the transport of the toxin RTX-I as well as that of RTX-II. This is Toxin RTX-I translocation ATP-binding protein (apxIB) from Actinobacillus pleuropneumoniae (Haemophilus pleuropneumoniae).